The primary structure comprises 360 residues: Sorbitol dehydrogenase (360 aa).

Cysteine 42 lines the Zn(2+) pocket. Tyrosine 48 serves as a coordination point for substrate. Histidine 67 and glutamate 68 together coordinate Zn(2+). Glutamate 153 contacts substrate. NAD(+) is bound by residues aspartate 201, arginine 206, 277-279 (AGN), and 301-303 (SFR). Arginine 303 and tyrosine 304 together coordinate substrate.

Belongs to the zinc-containing alcohol dehydrogenase family. In terms of assembly, homotetramer. It depends on Zn(2+) as a cofactor.

It carries out the reaction keto-D-fructose + NADH + H(+) = D-sorbitol + NAD(+). In terms of biological role, polyol dehydrogenase that catalyzes the reversible NAD(+)-dependent oxidation of various sugar alcohols. Is active with D-sorbitol (D-glucitol) as substrate, leading to the C2-oxidized product D-fructose. Suppresses growth arrest induced by a p53 tumor mutant in fission yeast. This Schizosaccharomyces pombe (strain 972 / ATCC 24843) (Fission yeast) protein is Sorbitol dehydrogenase (tms1).